Reading from the N-terminus, the 546-residue chain is CTP synthase (546 aa).

Residues 1–266 (MAKYYIFITG…DSYVCDRFCI (266 aa)) form an amidoligase domain region. A CTP-binding site is contributed by serine 14. Residue serine 14 coordinates UTP. ATP contacts are provided by residues 15 to 20 (SLGKGI) and aspartate 72. Residues aspartate 72 and glutamate 140 each coordinate Mg(2+). Residues 147-149 (DIE), 187-192 (KTKPTQ), and lysine 223 contribute to the CTP site. UTP contacts are provided by residues 187–192 (KTKPTQ) and lysine 223. Residues 291–544 (NIGIIGKYTE…VKAAFDFKNK (254 aa)) form the Glutamine amidotransferase type-1 domain. An L-glutamine-binding site is contributed by glycine 352. Cysteine 379 (nucleophile; for glutamine hydrolysis) is an active-site residue. Residues 380 to 383 (LGMQ), glutamate 403, and arginine 470 each bind L-glutamine. Residues histidine 517 and glutamate 519 contribute to the active site.

This sequence belongs to the CTP synthase family. In terms of assembly, homotetramer.

The enzyme catalyses UTP + L-glutamine + ATP + H2O = CTP + L-glutamate + ADP + phosphate + 2 H(+). It catalyses the reaction L-glutamine + H2O = L-glutamate + NH4(+). It carries out the reaction UTP + NH4(+) + ATP = CTP + ADP + phosphate + 2 H(+). The protein operates within pyrimidine metabolism; CTP biosynthesis via de novo pathway; CTP from UDP: step 2/2. Its activity is regulated as follows. Allosterically activated by GTP, when glutamine is the substrate; GTP has no effect on the reaction when ammonia is the substrate. The allosteric effector GTP functions by stabilizing the protein conformation that binds the tetrahedral intermediate(s) formed during glutamine hydrolysis. Inhibited by the product CTP, via allosteric rather than competitive inhibition. Its function is as follows. Catalyzes the ATP-dependent amination of UTP to CTP with either L-glutamine or ammonia as the source of nitrogen. Regulates intracellular CTP levels through interactions with the four ribonucleotide triphosphates. This is CTP synthase from Wigglesworthia glossinidia brevipalpis.